Reading from the N-terminus, the 504-residue chain is Arabinose import ATP-binding protein AraG (504 aa).

2 ABC transporter domains span residues 8-243 and 256-499; these read LSFR…MVGR and YGEE…MPKV. 40–47 is a binding site for ATP; the sequence is GENGAGKS.

It belongs to the ABC transporter superfamily. Arabinose importer (TC 3.A.1.2.2) family. As to quaternary structure, the complex is composed of two ATP-binding proteins (AraG), two transmembrane proteins (AraH) and a solute-binding protein (AraF).

It localises to the cell inner membrane. It catalyses the reaction L-arabinose(out) + ATP + H2O = L-arabinose(in) + ADP + phosphate + H(+). Part of the ABC transporter complex AraFGH involved in arabinose import. Responsible for energy coupling to the transport system. This is Arabinose import ATP-binding protein AraG from Shigella dysenteriae serotype 1 (strain Sd197).